A 282-amino-acid polypeptide reads, in one-letter code: MPLFGAHMSAAGGVSNAIRDIVEIGGEVLQLFTANQRQWTPKAPSAADVEAFRRRRAAFGGPVFSHASYLINIANGDGAASAKAVEALVREFERCTALGVDAVVLHPGAHLGAGRGAGILRAARNIDEVFDRCGGQTPALLLENTAGQGTCLGGGLNDLAEIIDASRHASQLGVCLDTAHAFGAGYALHTDEGYRRCMEDIEYGPGLAAVRLFHVNDSLVPCGSRKDRHTHIGEGQLGEAAFVRLLNDPVFAMHPMVLETPKEDGHAADRRNLATLRRLAGR.

Residues H66, H106, E143, D177, H180, H214, D227, H229, and E259 each coordinate Zn(2+).

It belongs to the AP endonuclease 2 family. Zn(2+) serves as cofactor.

It catalyses the reaction Endonucleolytic cleavage to 5'-phosphooligonucleotide end-products.. In terms of biological role, endonuclease IV plays a role in DNA repair. It cleaves phosphodiester bonds at apurinic or apyrimidinic (AP) sites, generating a 3'-hydroxyl group and a 5'-terminal sugar phosphate. This is Probable endonuclease 4 from Nitratidesulfovibrio vulgaris (strain DP4) (Desulfovibrio vulgaris).